Consider the following 309-residue polypeptide: Elongation factor Ts (309 aa).

The interval 82–85 is involved in Mg(2+) ion dislocation from EF-Tu; that stretch reads TDFV.

This sequence belongs to the EF-Ts family.

The protein resides in the cytoplasm. In terms of biological role, associates with the EF-Tu.GDP complex and induces the exchange of GDP to GTP. It remains bound to the aminoacyl-tRNA.EF-Tu.GTP complex up to the GTP hydrolysis stage on the ribosome. This Rickettsia akari (strain Hartford) protein is Elongation factor Ts.